Here is a 282-residue protein sequence, read N- to C-terminus: Pantothenate synthetase (282 aa).

ATP is bound at residue 30–37 (MGALHAGH). The Proton donor role is filled by His-37. Gln-61 contacts (R)-pantoate. Gln-61 is a beta-alanine binding site. 147 to 150 (GEKD) is a binding site for ATP. Position 153 (Gln-153) interacts with (R)-pantoate. Residues Val-176 and 184–187 (LSSR) contribute to the ATP site.

It belongs to the pantothenate synthetase family. As to quaternary structure, homodimer.

It is found in the cytoplasm. It catalyses the reaction (R)-pantoate + beta-alanine + ATP = (R)-pantothenate + AMP + diphosphate + H(+). The protein operates within cofactor biosynthesis; (R)-pantothenate biosynthesis; (R)-pantothenate from (R)-pantoate and beta-alanine: step 1/1. Catalyzes the condensation of pantoate with beta-alanine in an ATP-dependent reaction via a pantoyl-adenylate intermediate. The chain is Pantothenate synthetase from Bacteroides fragilis (strain YCH46).